A 735-amino-acid polypeptide reads, in one-letter code: MKTPKTLPEVTLSWEISADEITAILAGSHSNPFAVLGVHQGGDAFVARCFIPGAEEVTAMTLDGGFIGELKQLHADGVFAGPVSLAKLQPVRYRARRGDAEWAVTDPYSFGPVLGPMDDYFAREGSHLRLFDKMGAHLIKHEGAQGIHFAVWAPNAQRVSVVGDFNGWDGRRHVMRFRADSGIWEIFAPDVPLGVAYKFEIRGHDGVLLPLKADPFARRSELRPKTASIAAAELEQVWEDEAHLKHWRETDKRRQPISIYEVHAGSWQRRQDGTMLSWDELASSLIPYCVDMGFTHIEFLPITEHPYDPSWGYQTTGLYAPTARFGEPEGFARFVNGCHKVGIGVILDWVPAHFPTDEHGLGWFDGTALYEHEDPRKGFHPDWNTAIYNFGRTEVVSYLVNNALYWAEKFHLDGLRVDAVASMLYLDYSRKHGEWIPNEYGGNENLEAVRFLQDLNIRIYGQHSNVMTIAEESTSWPKVSQPVHEGGLGFGFKWNMGFMHDTLSYMKRDPVHRKHHHNELTFGLLYAYSENFVLPLSHDEVVHGKGSLIAKMPGDDWQKFANLRAYYAYMWGYPGKKLLFMGQEFAQWSEWSEAKSLDWNLLQYRMHEGMRRLVRDLNFTYRSKPALHERDCEGEGFEWLVADDHQNSVFAWLRKAPGQKPVAVITNFTPVYRENYTIRLPSAGRWREILNTDADIYGGSGKGNGGRVQAVDAGGDITCSITLPPLATIMLEPEN.

Aspartate 418 serves as the catalytic Nucleophile. The active-site Proton donor is glutamate 471.

Belongs to the glycosyl hydrolase 13 family. GlgB subfamily. Monomer.

The catalysed reaction is Transfers a segment of a (1-&gt;4)-alpha-D-glucan chain to a primary hydroxy group in a similar glucan chain.. Its pathway is glycan biosynthesis; glycogen biosynthesis. Catalyzes the formation of the alpha-1,6-glucosidic linkages in glycogen by scission of a 1,4-alpha-linked oligosaccharide from growing alpha-1,4-glucan chains and the subsequent attachment of the oligosaccharide to the alpha-1,6 position. This Rhizobium etli (strain ATCC 51251 / DSM 11541 / JCM 21823 / NBRC 15573 / CFN 42) protein is 1,4-alpha-glucan branching enzyme GlgB 1.